The sequence spans 659 residues: Pollen receptor-like kinase 6 (659 aa).

The N-terminal stretch at 1–26 (MAAAVLNPGFFLLILLLSFSISPSLQ) is a signal peptide. Topologically, residues 27–266 (YVSESEPLVR…SVPETSNKAA (240 aa)) are extracellular. An intrachain disulfide couples cysteine 58 to cysteine 67. LRR repeat units lie at residues 95–118 (LPNL…FFKL), 120–142 (GLKS…FFKD), 143–167 (MSKL…ITQL), 168–190 (PQLE…EFGS), and 192–214 (KNLK…SIAD). Asparagine 128 is a glycosylation site (N-linked (GlcNAc...) asparagine). Asparagine 179 carries an N-linked (GlcNAc...) asparagine glycan. Residue asparagine 221 is glycosylated (N-linked (GlcNAc...) asparagine). An LURE peptides binding region spans residues 226-242 (EYLCGPVVDVGCENIEL). Cysteine 229 and cysteine 237 are disulfide-bonded. A disordered region spans residues 241–260 (ELNDPQEGQPPSKPSSSVPE). A helical transmembrane segment spans residues 267–287 (INAIMVSISLLLLFFIIVGVI). Topologically, residues 288-659 (KRRNKKKNPD…AVRRIEQVKT (372 aa)) are cytoplasmic. The segment at 312 to 354 (VRISESSSTTAKRSTDSSRKRGGHSDDGSTKKGVSNIGKGGNG) is disordered. Over residues 324–341 (RSTDSSRKRGGHSDDGST) the composition is skewed to basic and acidic residues. The Protein kinase domain maps to 384 to 659 (KAAAEVLGNG…AVRRIEQVKT (276 aa)). Residues 390 to 398 (LGNGSLGSA) and lysine 412 each bind ATP. Position 464 is a phosphoserine (serine 464). A phosphothreonine mark is found at threonine 484 and threonine 557. Phosphoserine is present on serine 561.

The protein belongs to the protein kinase superfamily. Ser/Thr protein kinase family. In terms of assembly, interacts with ROPGEF8, ROPGEF9, ROPGEF12, ROPGEF13, PRK3, LIP1 and LIP2. Binds to LURE peptides via its LRR repeats; interacts with LURE1.1, LURE1.2, LURE1.3 and LURE1.4. In terms of tissue distribution, expressed specifically in the pollen tube, predominantly at the tip.

Its subcellular location is the cell membrane. It localises to the cytoplasmic granule. Functionally, key receptor for sensing species-specific attractants in cooperation with other pollen receptor-like kinases. Essential for pollen tube reorientation toward attractant peptides. The sequence is that of Pollen receptor-like kinase 6 from Arabidopsis thaliana (Mouse-ear cress).